The chain runs to 62 residues: Large ribosomal subunit protein bL28 (62 aa).

This sequence belongs to the bacterial ribosomal protein bL28 family.

This Ruminiclostridium cellulolyticum (strain ATCC 35319 / DSM 5812 / JCM 6584 / H10) (Clostridium cellulolyticum) protein is Large ribosomal subunit protein bL28.